Reading from the N-terminus, the 1685-residue chain is Collagen alpha-5(IV) chain (1685 aa).

The N-terminal stretch at 1–26 (MKLRGVSLAAGLFLLALSLWGQPAEA) is a signal peptide. Residues 27 to 41 (AACYGCSPGSKCDCS) form a nonhelical region (NC2) region. The segment at 42-1456 (GIKGEKGERG…QGPPGPPGTS (1415 aa)) is triple-helical region. Positions 49–1459 (ERGFPGLEGH…PGPPGTSSVA (1411 aa)) are disordered. The segment covering 52–61 (FPGLEGHPGL) has biased composition (low complexity). A compositionally biased stretch (pro residues) spans 62 to 73 (PGFPGPEGPPGP). An N-linked (GlcNAc...) asparagine glycan is attached at asparagine 125. The span at 188–212 (TGIPGPIGPPGPPGLMGPPGPPGLP) shows a compositional bias: pro residues. A compositionally biased stretch (low complexity) spans 214–225 (PKGNMGLNFQGP). Over residues 246–257 (EQKRPIDVEFQK) the composition is skewed to basic and acidic residues. The segment covering 266–281 (RGPPGPPGIRGPPGPP) has biased composition (pro residues). Composition is skewed to basic and acidic residues over residues 284-305 (EKGE…KDGE) and 324-333 (PGRDGEKGQK). The segment covering 413–430 (PPGISIPGPPGLDGQPGA) has biased composition (low complexity). Pro residues-rich tracts occupy residues 431 to 445 (PGLP…PHIP), 493 to 505 (PGQP…PGPP), 620 to 630 (MGPPGFGPPGP), and 709 to 727 (PGPP…PGAP). The span at 788–797 (RTGLDGLPGP) shows a compositional bias: low complexity. 2 stretches are compositionally biased toward pro residues: residues 848–859 (PGPPGLDVPGPP) and 868–880 (PGAP…PGSP). 5 stretches are compositionally biased toward low complexity: residues 882-901 (LPGK…MGMM), 912-931 (IPGR…QGQP), 983-999 (YQGL…SGQP), 1010-1026 (NPGL…PGLK), and 1111-1120 (TPGAKGQPGL). Positions 1139-1148 (PGNPGLPGEP) are enriched in pro residues. Composition is skewed to gly residues over residues 1149–1158 (GPVGGGGHPG) and 1202–1211 (GQKGDGGLPG). Composition is skewed to pro residues over residues 1234–1243 (QGPPGPPGSP) and 1256–1274 (PQGP…PPGL). Low complexity predominate over residues 1295–1308 (LPGLKGDQGPPGLQ). Residues 1353–1362 (IGPPGPPGLP) are compositionally biased toward pro residues. Residues 1461-1685 (GFLITRHSQT…SRCQVCMKRT (225 aa)) form the Collagen IV NC1 domain. 6 disulfides stabilise this stretch: cysteine 1476-cysteine 1567, cysteine 1509-cysteine 1564, cysteine 1521-cysteine 1527, cysteine 1586-cysteine 1681, cysteine 1620-cysteine 1678, and cysteine 1632-cysteine 1638. Residue methionine 1549 forms an S-Lysyl-methionine sulfilimine (Met-Lys) (interchain with K-1667) linkage. Residue lysine 1667 forms an S-Lysyl-methionine sulfilimine (Lys-Met) (interchain with M-1549) linkage.

The protein belongs to the type IV collagen family. In terms of assembly, there are six type IV collagen isoforms, alpha 1(IV)-alpha 6(IV), each of which can form a triple helix structure with 2 other chains to generate type IV collagen network. In terms of processing, prolines at the third position of the tripeptide repeating unit (G-X-Y) are hydroxylated in some or all of the chains. Type IV collagens contain numerous cysteine residues which are involved in inter- and intramolecular disulfide bonding. 12 of these, located in the NC1 domain, are conserved in all known type IV collagens. Post-translationally, the trimeric structure of the NC1 domains is stabilized by covalent bonds between Lys and Met residues. In terms of tissue distribution, isoform 2 is found in kidney.

It is found in the secreted. Its subcellular location is the extracellular space. It localises to the extracellular matrix. The protein localises to the basement membrane. In terms of biological role, type IV collagen is the major structural component of glomerular basement membranes (GBM), forming a 'chicken-wire' meshwork together with laminins, proteoglycans and entactin/nidogen. The protein is Collagen alpha-5(IV) chain (COL4A5) of Homo sapiens (Human).